Reading from the N-terminus, the 577-residue chain is Arginine--tRNA ligase (577 aa).

Positions 122-132 match the 'HIGH' region motif; sequence PNVAKEMHVGH.

The protein belongs to the class-I aminoacyl-tRNA synthetase family. In terms of assembly, monomer.

It localises to the cytoplasm. It catalyses the reaction tRNA(Arg) + L-arginine + ATP = L-arginyl-tRNA(Arg) + AMP + diphosphate. This is Arginine--tRNA ligase from Salmonella agona (strain SL483).